The primary structure comprises 180 residues: ATP-dependent protease subunit HslV (180 aa).

T6 is an active-site residue. Positions 162, 165, and 168 each coordinate Na(+).

The protein belongs to the peptidase T1B family. HslV subfamily. In terms of assembly, a double ring-shaped homohexamer of HslV is capped on each side by a ring-shaped HslU homohexamer. The assembly of the HslU/HslV complex is dependent on binding of ATP.

The protein resides in the cytoplasm. It carries out the reaction ATP-dependent cleavage of peptide bonds with broad specificity.. Its activity is regulated as follows. Allosterically activated by HslU binding. In terms of biological role, protease subunit of a proteasome-like degradation complex believed to be a general protein degrading machinery. The sequence is that of ATP-dependent protease subunit HslV from Oleidesulfovibrio alaskensis (strain ATCC BAA-1058 / DSM 17464 / G20) (Desulfovibrio alaskensis).